Consider the following 140-residue polypeptide: MAKKEVAKIKLQIPAGAANPSPPVGPALGQHGLNIMAFCKEFNAKTMEQKGMITPVVITVYADRSFSFITKTPPASVLLIKAAKLEKGSGEPNRNKVGSVTMAQVEEIAALKMPDLTAKDLEAAKRNILGTARSMGIEVK.

The protein belongs to the universal ribosomal protein uL11 family. In terms of assembly, part of the ribosomal stalk of the 50S ribosomal subunit. Interacts with L10 and the large rRNA to form the base of the stalk. L10 forms an elongated spine to which L12 dimers bind in a sequential fashion forming a multimeric L10(L12)X complex. In terms of processing, one or more lysine residues are methylated.

Its function is as follows. Forms part of the ribosomal stalk which helps the ribosome interact with GTP-bound translation factors. The polypeptide is Large ribosomal subunit protein uL11 (Nitratidesulfovibrio vulgaris (strain ATCC 29579 / DSM 644 / CCUG 34227 / NCIMB 8303 / VKM B-1760 / Hildenborough) (Desulfovibrio vulgaris)).